A 367-amino-acid chain; its full sequence is UDP-N-acetylglucosamine--N-acetylmuramyl-(pentapeptide) pyrophosphoryl-undecaprenol N-acetylglucosamine transferase (367 aa).

Residues T15 to G17, N127, R163, S191, I249, and Q294 each bind UDP-N-acetyl-alpha-D-glucosamine.

It belongs to the glycosyltransferase 28 family. MurG subfamily.

It is found in the cell inner membrane. The enzyme catalyses di-trans,octa-cis-undecaprenyl diphospho-N-acetyl-alpha-D-muramoyl-L-alanyl-D-glutamyl-meso-2,6-diaminopimeloyl-D-alanyl-D-alanine + UDP-N-acetyl-alpha-D-glucosamine = di-trans,octa-cis-undecaprenyl diphospho-[N-acetyl-alpha-D-glucosaminyl-(1-&gt;4)]-N-acetyl-alpha-D-muramoyl-L-alanyl-D-glutamyl-meso-2,6-diaminopimeloyl-D-alanyl-D-alanine + UDP + H(+). It participates in cell wall biogenesis; peptidoglycan biosynthesis. Its function is as follows. Cell wall formation. Catalyzes the transfer of a GlcNAc subunit on undecaprenyl-pyrophosphoryl-MurNAc-pentapeptide (lipid intermediate I) to form undecaprenyl-pyrophosphoryl-MurNAc-(pentapeptide)GlcNAc (lipid intermediate II). The sequence is that of UDP-N-acetylglucosamine--N-acetylmuramyl-(pentapeptide) pyrophosphoryl-undecaprenol N-acetylglucosamine transferase from Burkholderia orbicola (strain MC0-3).